The primary structure comprises 354 residues: Regulatory protein RapD (354 aa).

TPR repeat units lie at residues 64–105 (FENQ…VKTA), 107–126 (KHAV…IHNT), 130–163 (ADLY…YLHQ), 171–204 (ITCK…TQQL), 211–244 (CHAY…QEFE), and 321–353 (IEAW…FIMR).

The protein belongs to the Rap family.

It is found in the cytoplasm. The sequence is that of Regulatory protein RapD (rapD) from Bacillus subtilis (strain 168).